The primary structure comprises 452 residues: UDP-N-acetylmuramoylalanine--D-glutamate ligase (452 aa).

ATP is bound at residue 115–121 (GTNGKTT).

Belongs to the MurCDEF family.

The protein localises to the cytoplasm. It catalyses the reaction UDP-N-acetyl-alpha-D-muramoyl-L-alanine + D-glutamate + ATP = UDP-N-acetyl-alpha-D-muramoyl-L-alanyl-D-glutamate + ADP + phosphate + H(+). It participates in cell wall biogenesis; peptidoglycan biosynthesis. Functionally, cell wall formation. Catalyzes the addition of glutamate to the nucleotide precursor UDP-N-acetylmuramoyl-L-alanine (UMA). In Geobacter sp. (strain M21), this protein is UDP-N-acetylmuramoylalanine--D-glutamate ligase.